A 124-amino-acid chain; its full sequence is Small ribosomal subunit protein bS6 (124 aa).

Positions 99 to 124 (PLPAPRIVPGSEPEPVQQQEAAAVEA) are disordered. Residues 111-124 (PEPVQQQEAAAVEA) are compositionally biased toward low complexity.

Belongs to the bacterial ribosomal protein bS6 family.

Binds together with bS18 to 16S ribosomal RNA. The sequence is that of Small ribosomal subunit protein bS6 from Prochlorococcus marinus (strain MIT 9313).